Consider the following 247-residue polypeptide: Probable transcriptional regulatory protein ETA_14870 (247 aa).

The interval 1–20 is disordered; the sequence is MAGHSKWANTKHRKAAQDAK.

The protein belongs to the TACO1 family.

It localises to the cytoplasm. This chain is Probable transcriptional regulatory protein ETA_14870, found in Erwinia tasmaniensis (strain DSM 17950 / CFBP 7177 / CIP 109463 / NCPPB 4357 / Et1/99).